The sequence spans 880 residues: Leucine-rich repeat-containing protein 66 (880 aa).

A helical transmembrane segment spans residues 4–24; that stretch reads LYFRVITIVIGLYFTGIMTNA. Asn-45 carries an N-linked (GlcNAc...) asparagine glycan. 6 LRR repeats span residues 86–107, 110–130, 149–171, 172–193, 196–217, and 220–241; these read KIKHLDLSNNLISKITLSPFAY, ALEVLNLSNNAIHSLSLDLLS, LLKVLILQRNKLSDTPKGLWKLK, SLQSLDLSFNGILQIGWSDFHN, QLENLCLKSNKIFKIPPQAFKD, and KLQVIDLSNNALITILPMMIIA. N-linked (GlcNAc...) asparagine glycosylation occurs at Asn-115. The disordered stretch occupies residues 319 to 368; sequence SKAERPQGGRHTGISTLGKKAKAGSGLRKKQRRLPRSVRSTRDVQAAGKK. The span at 337 to 354 shows a compositional bias: basic residues; that stretch reads KKAKAGSGLRKKQRRLPR. The helical transmembrane segment at 376–396 threads the bilayer; that stretch reads ALAVCLSVFITFLVAFSLGAF. 2 disordered regions span residues 463–504 and 679–746; these read PHPH…NDGA and VTPA…SKDN. Positions 483-493 are enriched in polar residues; it reads GSSQSPGQCGD. Over residues 697–707 the composition is skewed to acidic residues; sequence CELESDCDSDE. The span at 709–720 shows a compositional bias: low complexity; it reads SLFTLSSISSES. Ser-723 is subject to Phosphoserine. Residues 737 to 746 are compositionally biased toward polar residues; the sequence is DESSGASKDN. The N-linked (GlcNAc...) asparagine glycan is linked to Asn-746. A Phosphoserine modification is found at Ser-752. Asn-756 is a glycosylation site (N-linked (GlcNAc...) asparagine). 2 disordered regions span residues 764–816 and 855–880; these read GKCK…PLGD and TPPCSAEVPSDPDKAAFHERDSDILK. 2 stretches are compositionally biased toward basic and acidic residues: residues 788–800 and 865–880; these read THLENASDTDRSE and DPDKAAFHERDSDILK.

It is found in the membrane. In Homo sapiens (Human), this protein is Leucine-rich repeat-containing protein 66 (LRRC66).